We begin with the raw amino-acid sequence, 271 residues long: MKRTAFFISDGTGLTAEALGHALLAQFEKIEFERVTVPYIDDEEKARDLVSRINKASEIDGERPLVFDTIVNGGIREIISRADGFMVDIFGTFLNPLEQELNSSSSYSVGKSHSINNAGSYERRIHAVNFALDNDDGARTRHYDEADLILIGASRSGKTPTCLYLALQYGIKAANYPITEEDLDDQKMPAALRPHKEKLFGLTIEPERLATIRNERRPNSRYSSLQQCMHEIEEIELMYKRERIPYLNTTAYSVEEISTRIMVTTGLKRHR.

152-159 contacts ADP; sequence GASRSGKT.

Belongs to the pyruvate, phosphate/water dikinase regulatory protein family. PSRP subfamily.

The catalysed reaction is [pyruvate, water dikinase] + ADP = [pyruvate, water dikinase]-phosphate + AMP + H(+). It catalyses the reaction [pyruvate, water dikinase]-phosphate + phosphate + H(+) = [pyruvate, water dikinase] + diphosphate. Bifunctional serine/threonine kinase and phosphorylase involved in the regulation of the phosphoenolpyruvate synthase (PEPS) by catalyzing its phosphorylation/dephosphorylation. The polypeptide is Putative phosphoenolpyruvate synthase regulatory protein (Marinobacter nauticus (strain ATCC 700491 / DSM 11845 / VT8) (Marinobacter aquaeolei)).